The following is a 337-amino-acid chain: Ornithine carbamoyltransferase, catabolic (337 aa).

Carbamoyl phosphate is bound by residues 57–60 (STRT), Gln-84, Arg-108, and 135–138 (HPTQ). L-ornithine is bound by residues Asn-167, Asp-231, and 235–236 (SM). Residues 272–273 (CL) and Arg-317 contribute to the carbamoyl phosphate site.

It belongs to the aspartate/ornithine carbamoyltransferase superfamily. OTCase family.

It localises to the cytoplasm. It catalyses the reaction carbamoyl phosphate + L-ornithine = L-citrulline + phosphate + H(+). It participates in amino-acid degradation; L-arginine degradation via ADI pathway; carbamoyl phosphate from L-arginine: step 2/2. Functionally, reversibly catalyzes the transfer of the carbamoyl group from carbamoyl phosphate (CP) to the N(epsilon) atom of ornithine (ORN) to produce L-citrulline. In Streptococcus agalactiae, this protein is Ornithine carbamoyltransferase, catabolic (arcB).